Reading from the N-terminus, the 115-residue chain is MKPGIHPEYREIVFVDVSNNFSFKTRSTMSTRETIKWEDGNEYPLAKIETSSESHPFYTGTQKIMDTAGRVEKFRQKFGTKAVAKASGDGAAKTAEKKAAAAEAKAAEKPAKKKA.

Belongs to the bacterial ribosomal protein bL31 family. Type B subfamily. In terms of assembly, part of the 50S ribosomal subunit.

This Polynucleobacter asymbioticus (strain DSM 18221 / CIP 109841 / QLW-P1DMWA-1) (Polynucleobacter necessarius subsp. asymbioticus) protein is Large ribosomal subunit protein bL31B.